The sequence spans 415 residues: Putative transcription factor BOFH (415 aa).

A disordered region spans residues S159–D221. The segment covering I174 to W183 has biased composition (gly residues). Positions Q193–L202 are enriched in basic residues. Acidic residues predominate over residues E206 to M220. 3 DNA-binding regions span residues R234–F238, N303–Y310, and Y374–T377.

This sequence belongs to the FLO/LFY family. Acts in the floral primordia.

It localises to the nucleus. Its function is as follows. Controls floral meristem identity. Is required very early in flower development and may act here as a transcription factor. This is Putative transcription factor BOFH from Brassica oleracea var. botrytis (Cauliflower).